A 473-amino-acid chain; its full sequence is Adhesive plaque matrix protein 2 (473 aa).

The N-terminal stretch at 1-17 is a signal peptide; sequence MLFSFFLLLTCTQLCLG. 3',4'-dihydroxyphenylalanine occurs at positions 23, 31, 36, and 43. EGF-like domains are found at residues 45 to 81, 82 to 117, 118 to 154, 155 to 191, 192 to 228, 229 to 265, 266 to 301, 302 to 340, 342 to 378, 383 to 420, and 425 to 461; these read PVNPCLKKPCKYNGVCKPRGGSYKCFCKGGYYGYNCN, LKNACKPNQCKNKSRCVPVGKTFKCVCRNGNFGRLC, EKNVCSPNPCKNNGKCSPLGKTGYKCTCSGGYTGPRC, EVHACKPNPCKNKGRCFPDGKTGYKCRCVDGYSGPTC, QENACKPNPCSNGGTCSADKFGDYSCECRPGYFGPEC, ERYVCAPNPCKNGGICSSDGSGGYRCRCKGGYSGPTC, KVNVCKPTPCKNSGRCVNKGSSYNCICKGGYSGPTC, GENVCKPNPCQNRGRCYPDNSDDGFKCRCVGGYKGPTCE, KPNPCNTKPCKNGGKCNYNGKIYTCKCAYGWRGRHCT, KPNPCVVSKPCKNRGKCIWNGKAYRCKCAYGYGGRHCT, and KKNPCASRPCKNRGKCTDKGNGYVCKCARGYSGRYCS. 33 disulfide bridges follow: cysteine 49–cysteine 60, cysteine 54–cysteine 69, cysteine 71–cysteine 80, cysteine 86–cysteine 97, cysteine 91–cysteine 106, cysteine 108–cysteine 117, cysteine 122–cysteine 133, cysteine 127–cysteine 143, cysteine 145–cysteine 154, cysteine 159–cysteine 170, cysteine 164–cysteine 180, cysteine 182–cysteine 191, cysteine 196–cysteine 207, cysteine 201–cysteine 217, cysteine 219–cysteine 228, cysteine 233–cysteine 244, cysteine 238–cysteine 254, cysteine 256–cysteine 265, cysteine 270–cysteine 281, cysteine 275–cysteine 290, cysteine 292–cysteine 301, cysteine 306–cysteine 317, cysteine 311–cysteine 328, cysteine 330–cysteine 339, cysteine 346–cysteine 357, cysteine 351–cysteine 366, cysteine 368–cysteine 377, cysteine 387–cysteine 399, cysteine 393–cysteine 408, cysteine 410–cysteine 419, cysteine 429–cysteine 440, cysteine 434–cysteine 449, and cysteine 451–cysteine 460. A glycan (N-linked (GlcNAc...) asparagine) is linked at asparagine 93.

In terms of processing, contains L-DOPA (3',4'-dihydroxyphenylalanine). As to expression, produced by the byssal gland.

It localises to the secreted. Provides adhesiveness to the mussel's foot. Mussels produce one of the strongest water insoluble glues. The mussel's adhesive is a bundle of threads, called a byssus, formed by a fibrous collagenous core coated with adhesive proteins. In Mytilus galloprovincialis (Mediterranean mussel), this protein is Adhesive plaque matrix protein 2 (FP2).